We begin with the raw amino-acid sequence, 689 residues long: tRNA 5-methylaminomethyl-2-thiouridine biosynthesis bifunctional protein MnmC (689 aa).

The segment at Met-1–Pro-245 is tRNA (mnm(5)s(2)U34)-methyltransferase. Positions Ile-270–Arg-689 are FAD-dependent cmnm(5)s(2)U34 oxidoreductase.

This sequence in the N-terminal section; belongs to the methyltransferase superfamily. tRNA (mnm(5)s(2)U34)-methyltransferase family. The protein in the C-terminal section; belongs to the DAO family. FAD serves as cofactor.

The protein resides in the cytoplasm. The catalysed reaction is 5-aminomethyl-2-thiouridine(34) in tRNA + S-adenosyl-L-methionine = 5-methylaminomethyl-2-thiouridine(34) in tRNA + S-adenosyl-L-homocysteine + H(+). Catalyzes the last two steps in the biosynthesis of 5-methylaminomethyl-2-thiouridine (mnm(5)s(2)U) at the wobble position (U34) in tRNA. Catalyzes the FAD-dependent demodification of cmnm(5)s(2)U34 to nm(5)s(2)U34, followed by the transfer of a methyl group from S-adenosyl-L-methionine to nm(5)s(2)U34, to form mnm(5)s(2)U34. The chain is tRNA 5-methylaminomethyl-2-thiouridine biosynthesis bifunctional protein MnmC from Yersinia pestis.